Reading from the N-terminus, the 213-residue chain is Imidazole glycerol phosphate synthase subunit HisH (213 aa).

The 208-residue stretch at 4-211 (NLGLIDYGMG…LTWLRNGAEP (208 aa)) folds into the Glutamine amidotransferase type-1 domain. Cys-82 functions as the Nucleophile in the catalytic mechanism. Catalysis depends on residues His-186 and Glu-188.

In terms of assembly, heterodimer of HisH and HisF.

The protein resides in the cytoplasm. It catalyses the reaction 5-[(5-phospho-1-deoxy-D-ribulos-1-ylimino)methylamino]-1-(5-phospho-beta-D-ribosyl)imidazole-4-carboxamide + L-glutamine = D-erythro-1-(imidazol-4-yl)glycerol 3-phosphate + 5-amino-1-(5-phospho-beta-D-ribosyl)imidazole-4-carboxamide + L-glutamate + H(+). The enzyme catalyses L-glutamine + H2O = L-glutamate + NH4(+). It participates in amino-acid biosynthesis; L-histidine biosynthesis; L-histidine from 5-phospho-alpha-D-ribose 1-diphosphate: step 5/9. In terms of biological role, IGPS catalyzes the conversion of PRFAR and glutamine to IGP, AICAR and glutamate. The HisH subunit catalyzes the hydrolysis of glutamine to glutamate and ammonia as part of the synthesis of IGP and AICAR. The resulting ammonia molecule is channeled to the active site of HisF. The sequence is that of Imidazole glycerol phosphate synthase subunit HisH from Synechococcus sp. (strain CC9605).